The following is a 65-amino-acid chain: VESP-VB1 (65 aa).

An N-terminal signal peptide occupies residues 1 to 23 (MKMSILFLFALIASLACLQLTFA). AXPX repeat units follow at residues 23–26 (AAPA), 27–30 (ASPL), 31–34 (ANPG), 35–38 (ASPE), 39–42 (AAPL), 43–46 (ADPL), and 47–50 (ADPF). The propeptide occupies 24–49 (APAASPLANPGASPEAAPLADPLADP). At Leu62 the chain carries Leucine amide.

As to expression, expressed by the venom gland.

It is found in the secreted. Its function is as follows. Antimicrobial peptide. Shows activity against both Gram-positive (S.aureus MIC=1.0-3.75 ug/ml) and -negative (E.coli MIC=7.5-15 ug/ml) bacteria, as well against fungi (C.albicans MIC=30 ug/ml). Also promotes important mast cell degranulation. Shows little hemolytic activity on rabbit and human erythrocytes. Its mast cell degranulation activity may be related to the activation of G-protein coupled receptors in mast cells as well as interaction with other proteins located in cell endosomal membranes in the mast cells. The sequence is that of VESP-VB1 from Vespa bicolor (Black shield wasp).